Here is a 199-residue protein sequence, read N- to C-terminus: ATP synthase subunit b (199 aa).

The helical transmembrane segment at 5-25 (SFVTTLSVCVMILGLAALGFA) threads the bilayer.

The protein belongs to the ATPase B chain family. F-type ATPases have 2 components, F(1) - the catalytic core - and F(0) - the membrane proton channel. F(1) has five subunits: alpha(3), beta(3), gamma(1), delta(1), epsilon(1). F(0) has three main subunits: a(1), b(2) and c(10-14). The alpha and beta chains form an alternating ring which encloses part of the gamma chain. F(1) is attached to F(0) by a central stalk formed by the gamma and epsilon chains, while a peripheral stalk is formed by the delta and b chains.

The protein localises to the cell inner membrane. Functionally, f(1)F(0) ATP synthase produces ATP from ADP in the presence of a proton or sodium gradient. F-type ATPases consist of two structural domains, F(1) containing the extramembraneous catalytic core and F(0) containing the membrane proton channel, linked together by a central stalk and a peripheral stalk. During catalysis, ATP synthesis in the catalytic domain of F(1) is coupled via a rotary mechanism of the central stalk subunits to proton translocation. In terms of biological role, component of the F(0) channel, it forms part of the peripheral stalk, linking F(1) to F(0). The chain is ATP synthase subunit b from Citrifermentans bemidjiense (strain ATCC BAA-1014 / DSM 16622 / JCM 12645 / Bem) (Geobacter bemidjiensis).